We begin with the raw amino-acid sequence, 79 residues long: Small ribosomal subunit protein bS16cz (79 aa).

It belongs to the bacterial ribosomal protein bS16 family.

It localises to the plastid. Its subcellular location is the chloroplast. The protein is Small ribosomal subunit protein bS16cz of Arabidopsis thaliana (Mouse-ear cress).